The sequence spans 286 residues: GTP-binding protein 8 (286 aa).

The region spanning 105 to 278 (KQPEVCFMGR…RCFIAHVTGK (174 aa)) is the EngB-type G domain. GTP is bound by residues 113 to 120 (GRSNVGKS), 142 to 146 (GHTKK), 160 to 163 (DMPG), 222 to 225 (TKID), and 257 to 259 (VSS). Mg(2+) contacts are provided by Ser120 and Thr144.

This sequence belongs to the TRAFAC class TrmE-Era-EngA-EngB-Septin-like GTPase superfamily. EngB GTPase family. It depends on Mg(2+) as a cofactor.

In Danio rerio (Zebrafish), this protein is GTP-binding protein 8 (gtpbp8).